The chain runs to 474 residues: Chromosomal replication initiator protein DnaA (474 aa).

The tract at residues 1–91 is domain I, interacts with DnaA modulators; that stretch reads MSEELWQRCL…STRASTPAAS (91 aa). The tract at residues 89-138 is disordered; it reads AASYFNGSSSSSSNGPITTPAAAPAPRQPESDSRPQPTSLGGARKHRSNL. The interval 91-136 is domain II; that stretch reads SYFNGSSSSSSNGPITTPAAAPAPRQPESDSRPQPTSLGGARKHRS. A compositionally biased stretch (low complexity) spans 96–113; it reads SSSSSSNGPITTPAAAPA. Residues 137 to 354 form a domain III, AAA+ region region; sequence NLNTGFTFST…GALRRVIAHV (218 aa). 4 residues coordinate ATP: G182, G184, K185, and T186. The interval 355–474 is domain IV, binds dsDNA; sequence RFTGAQIDIG…YLNLLRTLTS (120 aa).

It belongs to the DnaA family. As to quaternary structure, oligomerizes as a right-handed, spiral filament on DNA at oriC.

Its subcellular location is the cytoplasm. Functionally, plays an essential role in the initiation and regulation of chromosomal replication. ATP-DnaA binds to the origin of replication (oriC) to initiate formation of the DNA replication initiation complex once per cell cycle. Binds the DnaA box (a 9 base pair repeat at the origin) and separates the double-stranded (ds)DNA. Forms a right-handed helical filament on oriC DNA; dsDNA binds to the exterior of the filament while single-stranded (ss)DNA is stabiized in the filament's interior. The ATP-DnaA-oriC complex binds and stabilizes one strand of the AT-rich DNA unwinding element (DUE), permitting loading of DNA polymerase. After initiation quickly degrades to an ADP-DnaA complex that is not apt for DNA replication. Binds acidic phospholipids. This chain is Chromosomal replication initiator protein DnaA, found in Alcanivorax borkumensis (strain ATCC 700651 / DSM 11573 / NCIMB 13689 / SK2).